The following is a 475-amino-acid chain: Rho GTPase-activating protein 15 (475 aa).

The segment at 1 to 22 (MERSTTSDTASEKPNPSHSTGA) is disordered. The region spanning 80–190 (VVEKEGYLLK…WFHAIKNAID (111 aa)) is the PH domain. Positions 281–470 (SHLHLVCEHE…LMLSEYSKIF (190 aa)) constitute a Rho-GAP domain.

It is found in the cytoplasm. It localises to the membrane. Its function is as follows. GTPase activator for the Rho-type GTPases by converting them to an inactive GDP-bound state. The protein is Rho GTPase-activating protein 15 (ARHGAP15) of Gallus gallus (Chicken).